The following is a 293-amino-acid chain: MTDSTRSLRNCLAPAKLNLFLHITGRRPNGYHDLQSVFQLLNWGDTLHFTLRDDGRVARVTDVPGVPEESDLVVRAANLLKTHTGTAHGVDIEIDKILPMGAGLGGGSSDAATTLLALNRLWQLDLPRAELQSLAVKLGADVPFFIFGKNAFAEGIGEELAEVQLPTRWFLVVTPRVHVPTAEIFSDELLTRDTKPVTIADFLAQQTSDAGWPDSFGRNDMQEVVTRKYAEVAQVVKWLYDVTPARMTGSGASVFAAFHSKHEAEAAKAKLPASWNGAVAESLNEHPLFTFAS.

Lysine 16 is an active-site residue. 99 to 109 (PMGAGLGGGSS) serves as a coordination point for ATP. Aspartate 141 is a catalytic residue.

It belongs to the GHMP kinase family. IspE subfamily.

The catalysed reaction is 4-CDP-2-C-methyl-D-erythritol + ATP = 4-CDP-2-C-methyl-D-erythritol 2-phosphate + ADP + H(+). The protein operates within isoprenoid biosynthesis; isopentenyl diphosphate biosynthesis via DXP pathway; isopentenyl diphosphate from 1-deoxy-D-xylulose 5-phosphate: step 3/6. Its function is as follows. Catalyzes the phosphorylation of the position 2 hydroxy group of 4-diphosphocytidyl-2C-methyl-D-erythritol. In Burkholderia cenocepacia (strain ATCC BAA-245 / DSM 16553 / LMG 16656 / NCTC 13227 / J2315 / CF5610) (Burkholderia cepacia (strain J2315)), this protein is 4-diphosphocytidyl-2-C-methyl-D-erythritol kinase.